A 95-amino-acid polypeptide reads, in one-letter code: Selenoprotein K (95 aa).

Residues 20 to 42 (LSFLTDMFWGITDFIVMFFQSII) form a helical membrane-spanning segment. A disordered region spans residues 48 to 95 (RRGCQNSSSRTRFDDGRGPPGNPRRRMGRIDHNSGPNAPPMSGGGUGR). Sec93 is a non-standard amino acid (selenocysteine).

The protein belongs to the selenoprotein K family.

It localises to the endoplasmic reticulum membrane. The protein resides in the cell membrane. Its function is as follows. Required for Ca(2+) flux in immune cells and plays a role in T-cell proliferation and in T-cell and neutrophil migration. Involved in endoplasmic reticulum-associated degradation (ERAD) of soluble glycosylated proteins. Required for cell surface expression of CD36 and involved in macrophage uptake of low-density lipoprotein and in foam cell formation. Required for palmitoylation. The protein is Selenoprotein K (selenok) of Xenopus tropicalis (Western clawed frog).